A 425-amino-acid chain; its full sequence is Serine/threonine-protein kinase VRK1 (425 aa).

The Protein kinase domain occupies 38–329 (WKLGSAVGQG…KLRGILQQGL (292 aa)). ATP-binding positions include 44-52 (VGQGGFGLL) and Lys-72. The Proton acceptor role is filled by Asp-178. Residues 343-425 (GVATNSTSLP…KSRGRPKKNS (83 aa)) form a disordered region. The span at 415-425 (KKSRGRPKKNS) shows a compositional bias: basic residues.

It belongs to the protein kinase superfamily. CK1 Ser/Thr protein kinase family. VRK subfamily.

The protein resides in the nucleus. Its subcellular location is the cytoplasm. The protein localises to the cajal body. It catalyses the reaction L-seryl-[protein] + ATP = O-phospho-L-seryl-[protein] + ADP + H(+). The catalysed reaction is L-threonyl-[protein] + ATP = O-phospho-L-threonyl-[protein] + ADP + H(+). Its function is as follows. Serine/threonine kinase involved in the regulation of key cellular processes including the cell cycle, nuclear condensation, transcription regulation, and DNA damage response. Controls chromatin organization and remodeling by mediating phosphorylation of histone H3 on 'Thr-4' and histone H2AX (H2aXT4ph). It also phosphorylates KAT5 in response to DNA damage, promoting KAT5 association with chromatin and histone acetyltransferase activity. Is involved in the regulation of cell cycle progression of neural progenitors, and is required for proper cortical neuronal migration. Is involved in neurite elongation and branching in motor neurons, and has an essential role in Cajal bodies assembly, acting through COIL phosphorylation and the control of coilin degradation. Involved in Golgi disassembly during the cell cycle: following phosphorylation by PLK3 during mitosis, it is required to induce Golgi fragmentation. Phosphorylates BANF1: disrupts its ability to bind DNA, reduces its binding to LEM domain-containing proteins and causes its relocalization from the nucleus to the cytoplasm. Phosphorylates TP53BP1 and p53/TP53 on 'Thr-18', preventing the interaction between p53/TP53 and MDM2. Phosphorylates ATF2 which activates its transcriptional activity. Phosphorylates JUN. The sequence is that of Serine/threonine-protein kinase VRK1 (vrk1) from Danio rerio (Zebrafish).